The chain runs to 602 residues: Elongation factor 4 (602 aa).

The region spanning 8-190 (DLIRNFSIVA…AIVHRLPPPK (183 aa)) is the tr-type G domain. Residues 20–25 (DHGKST) and 137–140 (NKID) contribute to the GTP site.

The protein belongs to the TRAFAC class translation factor GTPase superfamily. Classic translation factor GTPase family. LepA subfamily.

It localises to the cell inner membrane. It catalyses the reaction GTP + H2O = GDP + phosphate + H(+). Its function is as follows. Required for accurate and efficient protein synthesis under certain stress conditions. May act as a fidelity factor of the translation reaction, by catalyzing a one-codon backward translocation of tRNAs on improperly translocated ribosomes. Back-translocation proceeds from a post-translocation (POST) complex to a pre-translocation (PRE) complex, thus giving elongation factor G a second chance to translocate the tRNAs correctly. Binds to ribosomes in a GTP-dependent manner. The chain is Elongation factor 4 from Cereibacter sphaeroides (strain ATCC 17029 / ATH 2.4.9) (Rhodobacter sphaeroides).